We begin with the raw amino-acid sequence, 233 residues long: tRNA (guanine-N(7)-)-methyltransferase (233 aa).

Positions 62, 87, 116, and 138 each coordinate S-adenosyl-L-methionine. Residue Asp138 is part of the active site. Substrate contacts are provided by residues Lys142, Asp174, and Thr212–Glu215.

Belongs to the class I-like SAM-binding methyltransferase superfamily. TrmB family.

It carries out the reaction guanosine(46) in tRNA + S-adenosyl-L-methionine = N(7)-methylguanosine(46) in tRNA + S-adenosyl-L-homocysteine. It participates in tRNA modification; N(7)-methylguanine-tRNA biosynthesis. In terms of biological role, catalyzes the formation of N(7)-methylguanine at position 46 (m7G46) in tRNA. In Bartonella henselae (strain ATCC 49882 / DSM 28221 / CCUG 30454 / Houston 1) (Rochalimaea henselae), this protein is tRNA (guanine-N(7)-)-methyltransferase.